The sequence spans 616 residues: Chaperone protein HscA (616 aa).

It belongs to the heat shock protein 70 family.

Its function is as follows. Chaperone involved in the maturation of iron-sulfur cluster-containing proteins. Has a low intrinsic ATPase activity which is markedly stimulated by HscB. Involved in the maturation of IscU. This chain is Chaperone protein HscA, found in Yersinia enterocolitica serotype O:8 / biotype 1B (strain NCTC 13174 / 8081).